The following is a 362-amino-acid chain: Probable dual-specificity RNA methyltransferase RlmN (362 aa).

E105 acts as the Proton acceptor in catalysis. Positions 111–344 constitute a Radical SAM core domain; sequence HEYGNSICVT…VTIRREQGHD (234 aa). A disulfide bond links C118 and C349. Residues C125, C129, and C132 each contribute to the [4Fe-4S] cluster site. S-adenosyl-L-methionine-binding positions include 175–176, S207, 230–232, and N306; these read GE and SLH. The active-site S-methylcysteine intermediate is the C349.

It belongs to the radical SAM superfamily. RlmN family. [4Fe-4S] cluster is required as a cofactor.

The protein localises to the cytoplasm. It catalyses the reaction adenosine(2503) in 23S rRNA + 2 reduced [2Fe-2S]-[ferredoxin] + 2 S-adenosyl-L-methionine = 2-methyladenosine(2503) in 23S rRNA + 5'-deoxyadenosine + L-methionine + 2 oxidized [2Fe-2S]-[ferredoxin] + S-adenosyl-L-homocysteine. The enzyme catalyses adenosine(37) in tRNA + 2 reduced [2Fe-2S]-[ferredoxin] + 2 S-adenosyl-L-methionine = 2-methyladenosine(37) in tRNA + 5'-deoxyadenosine + L-methionine + 2 oxidized [2Fe-2S]-[ferredoxin] + S-adenosyl-L-homocysteine. Its function is as follows. Specifically methylates position 2 of adenine 2503 in 23S rRNA and position 2 of adenine 37 in tRNAs. The protein is Probable dual-specificity RNA methyltransferase RlmN of Bacillus cereus (strain G9842).